Consider the following 416-residue polypeptide: Cysteate synthase (416 aa).

The residue at position 104 (Lys104) is an N6-(pyridoxal phosphate)lysine. Residue Asn130 participates in pyridoxal 5'-phosphate binding.

The protein belongs to the threonine synthase family. Cysteate synthase subfamily. In terms of assembly, homotrimer. It depends on pyridoxal 5'-phosphate as a cofactor.

The enzyme catalyses O-phospho-L-serine + sulfite + H(+) = L-cysteate + phosphate. It participates in cofactor biosynthesis; coenzyme M biosynthesis. Its function is as follows. Specifically catalyzes the beta-elimination of phosphate from L-phosphoserine and the beta-addition of sulfite to the dehydroalanine intermediate to produce L-cysteate. The sequence is that of Cysteate synthase from Methanosarcina mazei (strain ATCC BAA-159 / DSM 3647 / Goe1 / Go1 / JCM 11833 / OCM 88) (Methanosarcina frisia).